Consider the following 334-residue polypeptide: N-acetyl-gamma-glutamyl-phosphate reductase (334 aa).

The active site involves Cys-142.

It belongs to the NAGSA dehydrogenase family. Type 1 subfamily.

The protein localises to the cytoplasm. It catalyses the reaction N-acetyl-L-glutamate 5-semialdehyde + phosphate + NADP(+) = N-acetyl-L-glutamyl 5-phosphate + NADPH + H(+). It participates in amino-acid biosynthesis; L-arginine biosynthesis; N(2)-acetyl-L-ornithine from L-glutamate: step 3/4. Its function is as follows. Catalyzes the NADPH-dependent reduction of N-acetyl-5-glutamyl phosphate to yield N-acetyl-L-glutamate 5-semialdehyde. In Pelodictyon phaeoclathratiforme (strain DSM 5477 / BU-1), this protein is N-acetyl-gamma-glutamyl-phosphate reductase.